A 1844-amino-acid polypeptide reads, in one-letter code: Non-structural replication polyprotein (1844 aa).

Residues 58 to 219 form the Alphavirus-like MT domain; the sequence is SGLGTSHHPH…NQPSDAHSWL (162 aa). Residues 571-739 are disordered; the sequence is TAFLPFTPTT…QLLPAPLTND (169 aa). 2 stretches are compositionally biased toward low complexity: residues 609–621 and 726–736; these read SSPGAQPPTTTAA and LPSSQLLPAPL. The OTU domain maps to 728 to 879; sequence SSQLLPAPLT…FSPGKRLLGS (152 aa). A Peptidase C21 domain is found at 730 to 884; sequence QLLPAPLTND…RLLGSQPSAK (155 aa). Cys783 serves as the catalytic For protease activity. The tract at residues 859–887 is disordered; that stretch reads DITHTTGPPSHFSPGKRLLGSQPSAKGHP. A GPP flap motif is present at residues 865–867; sequence GPP. The For protease activity role is filled by His869. The region spanning 946 to 1103 is the (+)RNA virus helicase ATP-binding domain; the sequence is TGPTPKERII…RLLPYIDMYC (158 aa). 976 to 983 provides a ligand contact to ATP; that stretch reads GFAGCGKT. The 133-residue stretch at 1104-1236 folds into the (+)RNA virus helicase C-terminal domain; it reads WWSYRIPQCI…SLIIMDRYFP (133 aa). In terms of domain architecture, RdRp catalytic spans 1572–1678; the sequence is TPKIANDYTA…DHPLPTRHDW (107 aa).

This sequence belongs to the Tymoviridae non-structural replication polyprotein family. Interacts with host ubiquitin. In terms of processing, specific enzymatic cleavages by the host yield mature proteins.

It is found in the host chloroplast envelope. The catalysed reaction is Thiol-dependent hydrolysis of ester, thioester, amide, peptide and isopeptide bonds formed by the C-terminal Gly of ubiquitin (a 76-residue protein attached to proteins as an intracellular targeting signal).. The enzyme catalyses RNA(n) + a ribonucleoside 5'-triphosphate = RNA(n+1) + diphosphate. In terms of biological role, acts as a cysteine protease, methyltransferase and deubiquitinase. The cysteine protease activity cleaves the polyprotein giving rise to mature proteins. The protease has the ability to process substrates in trans. The methyltransferase domain is probably involved in viral RNA capping. The deubiquitylating activity counteracts the degradation of the viral polymerase mediated by the host ubiquitin-proteasome system. The polymerase is thus stabilized and infectivity is increased. Favors K63 poly-Ub linkage. RNA-directed RNA polymerase is responsible for the replication and transcription of the genome. This Turnip yellow mosaic virus protein is Non-structural replication polyprotein.